The chain runs to 712 residues: Copper amine oxidase 1 (712 aa).

319-330 (AFDLGEYGAGYL) is a binding site for substrate. The active-site Proton acceptor is the Asp321. Cys340 and Cys366 are oxidised to a cystine. Substrate is bound at residue 404–409 (AANYEY). Tyr407 functions as the Schiff-base intermediate with substrate; via topaquinone in the catalytic mechanism. Tyr407 carries the 2',4',5'-topaquinone modification. His458 and His460 together coordinate Cu cation. Mn(2+) contacts are provided by Asp616 and Ile617. His627 is a binding site for Cu cation.

Belongs to the copper/topaquinone oxidase family. In terms of assembly, homodimer. Requires Cu cation as cofactor. The cofactor is Zn(2+). L-topaquinone is required as a cofactor. Mn(2+) serves as cofactor. Topaquinone (TPQ) is generated by copper-dependent autoxidation of a specific tyrosyl residue.

The protein localises to the cytoplasm. It catalyses the reaction a primary methyl amine + O2 + H2O = an aldehyde + H2O2 + NH4(+). Its function is as follows. Copper amine oxidase involved in the metabolism of xenobiotic and biogenic amines. Capable of catalyzing the oxidative deamination of primary amines such as ethylamine as alternate sources of nitrogen to support growth. The chain is Copper amine oxidase 1 (cao1) from Schizosaccharomyces pombe (strain 972 / ATCC 24843) (Fission yeast).